The primary structure comprises 356 residues: Guanine nucleotide-binding protein alpha-15 subunit (356 aa).

A lipid anchor (N-myristoyl glycine) is attached at Gly-2. Cys-5 carries the S-palmitoyl cysteine lipid modification. Residues 33-356 (GNQKLLLLGT…GRNLRGTGME (324 aa)) form the G-alpha domain. Positions 36–49 (KLLLLGTGECGKST) are G1 motif. Residues 41–48 (GTGECGKS), 177–183 (LRIRIPT), 202–206 (DVGGQ), 271–274 (NKRD), and Ala-328 each bind GTP. 2 residues coordinate Mg(2+): Ser-48 and Thr-183. The interval 175–183 (DMLRIRIPT) is G2 motif. A G3 motif region spans residues 198 to 207 (FRIYDVGGQR). Residues 267-274 (ILFLNKRD) are G4 motif. The G5 motif stretch occupies residues 326–331 (TCATDT).

The protein belongs to the G-alpha family. As to quaternary structure, g proteins are composed of 3 units; alpha, beta and gamma. The alpha chain contains the guanine nucleotide binding site.

In terms of biological role, guanine nucleotide-binding proteins (G proteins) are involved as modulators or transducers in various transmembrane signaling systems. The polypeptide is Guanine nucleotide-binding protein alpha-15 subunit (gpa-15) (Caenorhabditis elegans).